The following is a 417-amino-acid chain: NADH-quinone oxidoreductase subunit D (417 aa).

It belongs to the complex I 49 kDa subunit family. In terms of assembly, NDH-1 is composed of 14 different subunits. Subunits NuoB, C, D, E, F, and G constitute the peripheral sector of the complex.

The protein localises to the cell inner membrane. The enzyme catalyses a quinone + NADH + 5 H(+)(in) = a quinol + NAD(+) + 4 H(+)(out). Functionally, NDH-1 shuttles electrons from NADH, via FMN and iron-sulfur (Fe-S) centers, to quinones in the respiratory chain. The immediate electron acceptor for the enzyme in this species is believed to be ubiquinone. Couples the redox reaction to proton translocation (for every two electrons transferred, four hydrogen ions are translocated across the cytoplasmic membrane), and thus conserves the redox energy in a proton gradient. The protein is NADH-quinone oxidoreductase subunit D of Francisella tularensis subsp. mediasiatica (strain FSC147).